Consider the following 751-residue polypeptide: Semaphorin-3C (751 aa).

A signal peptide spans 1–21 (MAFRTICVLVGVFICSICVKG). The 484-residue stretch at 28–511 (RVYLTFDELR…SNEGVSQVSL (484 aa)) folds into the Sema domain. Asn-81 carries an N-linked (GlcNAc...) asparagine glycan. A disulfide bridge connects residues Cys-101 and Cys-112. N-linked (GlcNAc...) asparagine glycosylation is present at Asn-123. Cys-130 and Cys-139 are disulfide-bonded. N-linked (GlcNAc...) asparagine glycans are attached at residues Asn-252 and Asn-268. 2 disulfides stabilise this stretch: Cys-266-Cys-378 and Cys-290-Cys-338. A glycan (N-linked (GlcNAc...) asparagine) is linked at Asn-465. Cys-514 and Cys-532 are disulfide-bonded. One can recognise an Ig-like C2-type domain in the interval 571-655 (AYRNAAEIVQ…TENSFKQTIA (85 aa)). N-linked (GlcNAc...) asparagine glycans are attached at residues Asn-585 and Asn-586. Cysteines 592 and 643 form a disulfide. The span at 712-731 (TRQQHQQGDESQKMRGDYGK) shows a compositional bias: basic and acidic residues. Residues 712 to 751 (TRQQHQQGDESQKMRGDYGKLKALINSRKSRNRRNQLPES) form a disordered region.

Belongs to the semaphorin family. As to quaternary structure, interacts with PLXND1.

It localises to the secreted. Its function is as follows. Binds to plexin family members and plays an important role in the regulation of developmental processes. Required for normal cardiovascular development during embryogenesis. Functions as attractant for growing axons, and thereby plays an important role in axon growth and axon guidance. The protein is Semaphorin-3C (SEMA3C) of Pongo abelii (Sumatran orangutan).